The sequence spans 417 residues: MQTYLVGGAVRDYLLGLPVKDRDWVVVGADAQTMLAQGFQPVGKDFPVFLHPETHEEYTLARTERKTAKGYVGFSFHADKDVTLEQDLMRRDLTINAMAQDADGKIIDPFGGQRDLAAGILRHVSPAFAEDPVRILRTARFAARYRFEIAEETIKLMRQMVENGEADALVAERVWQEFAKGLMEKNPRKMIEVLRECGALKVLLPEVNALFGVPQRADYHPEIDSGIHTLMTLQRAADMGLSLPERYAALLHDLGKAKTPSDILPRHHGHDLAGVEPVREVNQRLRAPKHCAELAELVCRWHIIFHQVGQLKSQTILNVLKKTDAFRRPERFQTALNVCIADTQGRLNREHTPYPQRAHWFALLEAANQADSGKIAAECRAQGKAHLIAEQIDRARLAQIAPLQKTFRAAQDKTEKH.

Gly8 and Arg11 together coordinate ATP. CTP contacts are provided by Gly8 and Arg11. Mg(2+) is bound by residues Asp21 and Asp23. ATP is bound by residues Arg91, Arg137, and Arg140. Residues Arg91, Arg137, and Arg140 each contribute to the CTP site. The HD domain maps to 225–326; that stretch reads SGIHTLMTLQ…LNVLKKTDAF (102 aa).

Belongs to the tRNA nucleotidyltransferase/poly(A) polymerase family. Bacterial CCA-adding enzyme type 1 subfamily. Monomer. Can also form homodimers and oligomers. The cofactor is Mg(2+). It depends on Ni(2+) as a cofactor.

The enzyme catalyses a tRNA precursor + 2 CTP + ATP = a tRNA with a 3' CCA end + 3 diphosphate. The catalysed reaction is a tRNA with a 3' CCA end + 2 CTP + ATP = a tRNA with a 3' CCACCA end + 3 diphosphate. Functionally, catalyzes the addition and repair of the essential 3'-terminal CCA sequence in tRNAs without using a nucleic acid template. Adds these three nucleotides in the order of C, C, and A to the tRNA nucleotide-73, using CTP and ATP as substrates and producing inorganic pyrophosphate. tRNA 3'-terminal CCA addition is required both for tRNA processing and repair. Also involved in tRNA surveillance by mediating tandem CCA addition to generate a CCACCA at the 3' terminus of unstable tRNAs. While stable tRNAs receive only 3'-terminal CCA, unstable tRNAs are marked with CCACCA and rapidly degraded. In Neisseria meningitidis serogroup C / serotype 2a (strain ATCC 700532 / DSM 15464 / FAM18), this protein is Multifunctional CCA protein.